A 54-amino-acid chain; its full sequence is Hemoglobin subunit omega (54 aa).

A Globin domain is found at His-2 to Ile-54.

Belongs to the globin family.

In terms of biological role, hemoglobin omega chain is an embryonic-type beta-type chain found in prenatal and neonatal marsupials. This chain is Hemoglobin subunit omega, found in Notamacropus eugenii (Tammar wallaby).